The chain runs to 414 residues: Ena/VASP-like protein (414 aa).

In terms of domain architecture, WH1 spans 1 to 112 (MSEQSICQAR…NAMLFALNIM (112 aa)). Ser130 bears the Phosphoserine mark. Residues 157–369 (ATGPILPPGH…SRVKPAGSVN (213 aa)) are disordered. Residues 179–204 (GPPPPPPPPVPPPPTGSTPPPPPPLP) are compositionally biased toward pro residues. Positions 217–228 (SASGLAAALAGA) are enriched in low complexity. The segment at 220-240 (GLAAALAGAKLRRVQRPEDAS) is EVH2 block A. The EVH2 stretch occupies residues 220-411 (GLAAALAGAK…DAIRQELSGI (192 aa)). Positions 229-232 (KLRR) match the KLKR motif. Low complexity predominate over residues 240 to 251 (SGGSSPSGTSKS). 2 positions are modified to phosphoserine: Ser244 and Ser257. The interval 263-280 (GGLMEEMNKLLAKRRKAA) is EVH2 block B. A compositionally biased stretch (polar residues) spans 297 to 318 (EDPSTSPSPGTRATSQPPNSSE). Residues Ser302, Ser304, Ser327, Ser329, Ser339, Ser347, Ser352, and Ser367 each carry the phosphoserine modification. Residues 319-329 (AGRKPWERSNS) show a composition bias toward basic and acidic residues. The segment at 340–360 (RTPSVAKSPEAKSPLQSQPHS) is required for interaction with ZDHHC17. The EVH2 block C stretch occupies residues 377–411 (DLDRMKQEILEEVVRELHKVKEEIIDAIRQELSGI).

It belongs to the Ena/VASP family. Homotetramer. Binds to the SH3 domains of ABL1, LYN and SRC. Also binds to profilin, with preference for isoform IIa of PFN2, and the WW domain of APBB1/FE65. Binds to SEMA6A. Interacts, via the Pro-rich region, with the C-terminal SH3 domain of DNMBP. Interacts with RAPH1. Binds, via the EVH1 domain, the Pro-rich domain of Listeria monocytogenes actA. Binds, via the EVH1 domain, the Pro-rich domain of ZYX. Interacts with FYB1. Interacts with ZDHHC17. Post-translationally, phosphorylated by PKA; phosphorylation abolishes binding to SH3 domains of ABL and SRC. As to expression, highest expression in thymus and spleen (at protein level). Low levels in placenta, ovary, testis, fat and lung (at protein level). Isoform 1 and isoform 2 are expressed in cortical neurons and glial cells.

It is found in the cytoplasm. It localises to the cytoskeleton. The protein resides in the stress fiber. Its subcellular location is the cell projection. The protein localises to the lamellipodium. Ena/VASP proteins are actin-associated proteins involved in a range of processes dependent on cytoskeleton remodeling and cell polarity such as axon guidance and lamellipodial and filopodial dynamics in migrating cells. EVL enhances actin nucleation and polymerization. The protein is Ena/VASP-like protein (Evl) of Mus musculus (Mouse).